A 353-amino-acid polypeptide reads, in one-letter code: Polyprenal reductase 2 (353 aa).

6 consecutive transmembrane segments (helical) span residues 11–31 (PLLC…ALPI), 78–98 (FMHF…AIWF), 175–195 (MHIV…LSLA), 234–254 (PLLK…WGSL), 291–308 (YLAE…SGAE), and 313–335 (WFLF…NWYL).

It belongs to the steroid 5-alpha reductase family. Polyprenal reductase subfamily.

Its subcellular location is the cell membrane. The enzyme catalyses a di-trans,poly-cis-dolichal + NADP(+) = a di-trans,poly-cis-polyprenal + NADPH + H(+). It participates in protein modification; protein glycosylation. Its function is as follows. Plays a key role in early steps of protein N-linked glycosylation by being involved in the conversion of polyprenol into dolichol. Acts as a polyprenal reductase that mediates the reduction of polyprenal into dolichal in a NADP-dependent mechanism. Dolichols are required for the synthesis of dolichol-linked monosaccharides and the oligosaccharide precursor used for N-glycosylation. This Oryza sativa subsp. japonica (Rice) protein is Polyprenal reductase 2.